The following is a 489-amino-acid chain: Rhamnulokinase (489 aa).

13–17 (ASSGR) serves as a coordination point for ATP. A disulfide bridge connects residues Cys68 and Cys222. Residues Gly83 and 236-238 (HDT) each bind substrate. Residue Asp237 is the Proton acceptor of the active site. Thr259 contacts ATP. Asn296 is a substrate binding site. Gln304 is an ATP binding site. Residues Cys353 and Cys370 are joined by a disulfide bond. ATP is bound at residue Gly402. A disulfide bridge connects residues Cys413 and Cys417.

It belongs to the rhamnulokinase family. As to quaternary structure, monomer. Mg(2+) serves as cofactor.

The enzyme catalyses L-rhamnulose + ATP = L-rhamnulose 1-phosphate + ADP + H(+). It participates in carbohydrate degradation; L-rhamnose degradation; glycerone phosphate from L-rhamnose: step 2/3. Functionally, involved in the catabolism of L-rhamnose (6-deoxy-L-mannose). Catalyzes the transfer of the gamma-phosphate group from ATP to the 1-hydroxyl group of L-rhamnulose to yield L-rhamnulose 1-phosphate. In Escherichia coli O127:H6 (strain E2348/69 / EPEC), this protein is Rhamnulokinase.